Consider the following 482-residue polypeptide: Protein nucleotidyltransferase YdiU (482 aa).

Positions 88, 90, 91, 111, 123, 124, 174, and 181 each coordinate ATP. Residue Asp-250 is the Proton acceptor of the active site. Mg(2+) contacts are provided by Asn-251 and Asp-260. Position 260 (Asp-260) interacts with ATP.

Belongs to the SELO family. Mg(2+) serves as cofactor. It depends on Mn(2+) as a cofactor.

It carries out the reaction L-seryl-[protein] + ATP = 3-O-(5'-adenylyl)-L-seryl-[protein] + diphosphate. The catalysed reaction is L-threonyl-[protein] + ATP = 3-O-(5'-adenylyl)-L-threonyl-[protein] + diphosphate. The enzyme catalyses L-tyrosyl-[protein] + ATP = O-(5'-adenylyl)-L-tyrosyl-[protein] + diphosphate. It catalyses the reaction L-histidyl-[protein] + UTP = N(tele)-(5'-uridylyl)-L-histidyl-[protein] + diphosphate. It carries out the reaction L-seryl-[protein] + UTP = O-(5'-uridylyl)-L-seryl-[protein] + diphosphate. The catalysed reaction is L-tyrosyl-[protein] + UTP = O-(5'-uridylyl)-L-tyrosyl-[protein] + diphosphate. Nucleotidyltransferase involved in the post-translational modification of proteins. It can catalyze the addition of adenosine monophosphate (AMP) or uridine monophosphate (UMP) to a protein, resulting in modifications known as AMPylation and UMPylation. The chain is Protein nucleotidyltransferase YdiU from Cronobacter sakazakii (strain ATCC BAA-894) (Enterobacter sakazakii).